The following is a 198-amino-acid chain: Nascent polypeptide-associated complex subunit alpha (198 aa).

An NAC-A/B domain is found at 48–113 (ITRVVLKRTR…QAAAETGSVS (66 aa)). One can recognise a UBA domain in the interval 159-198 (LEDSDIKLVMEQANVSRNKAINGLKKNDSDVVNTIMDLCK).

Belongs to the NAC-alpha family. In terms of assembly, part of the nascent polypeptide-associated complex (NAC), consisting of EGD2 and EGD1. NAC associates with ribosomes via EGD1.

The protein localises to the cytoplasm. It localises to the nucleus. Its function is as follows. Component of the nascent polypeptide-associated complex (NAC), a dynamic component of the ribosomal exit tunnel, protecting the emerging polypeptides from interaction with other cytoplasmic proteins to ensure appropriate nascent protein targeting. The NAC complex also promotes mitochondrial protein import by enhancing productive ribosome interactions with the outer mitochondrial membrane and blocks the inappropriate interaction of ribosomes translating non-secretory nascent polypeptides with translocation sites in the membrane of the endoplasmic reticulum. EGD2 may also be involved in transcription regulation. This chain is Nascent polypeptide-associated complex subunit alpha (EGD2), found in Yarrowia lipolytica (strain CLIB 122 / E 150) (Yeast).